The sequence spans 444 residues: Guanosine nucleotide diphosphate dissociation inhibitor 2 (444 aa).

Belongs to the Rab GDI family. In terms of tissue distribution, expressed in roots and floral buds.

Its function is as follows. Regulates the GDP/GTP exchange reaction of most RAB proteins by inhibiting the dissociation of GDP from them, and the subsequent binding of GTP. This chain is Guanosine nucleotide diphosphate dissociation inhibitor 2 (GDI2), found in Arabidopsis thaliana (Mouse-ear cress).